Reading from the N-terminus, the 483-residue chain is Alginate biosynthesis protein AlgA (483 aa).

This sequence belongs to the mannose-6-phosphate isomerase type 2 family. In terms of assembly, monomer. Requires Co(2+) as cofactor.

The catalysed reaction is D-mannose 6-phosphate = D-fructose 6-phosphate. The enzyme catalyses alpha-D-mannose 1-phosphate + GTP + H(+) = GDP-alpha-D-mannose + diphosphate. The protein operates within nucleotide-sugar biosynthesis; GDP-alpha-D-mannose biosynthesis; GDP-alpha-D-mannose from alpha-D-mannose 1-phosphate (GTP route): step 1/1. It participates in nucleotide-sugar biosynthesis; GDP-alpha-D-mannose biosynthesis; alpha-D-mannose 1-phosphate from D-fructose 6-phosphate: step 1/2. Its function is as follows. Produces a precursor for alginate polymerization. The alginate layer provides a protective barrier against host immune defenses and antibiotics. The chain is Alginate biosynthesis protein AlgA (algA) from Pseudomonas syringae pv. tomato (strain ATCC BAA-871 / DC3000).